A 353-amino-acid chain; its full sequence is Putative glycosyltransferase TagX (353 aa).

Belongs to the glycosyltransferase 2 family.

The sequence is that of Putative glycosyltransferase TagX (tagX) from Staphylococcus aureus (strain Mu50 / ATCC 700699).